The sequence spans 674 residues: Electrogenic aspartate/glutamate antiporter SLC25A13, mitochondrial (674 aa).

At Ala-2 the chain carries N-acetylalanine. The tract at residues 2–295 (AAAKVALTKR…TLADIERIAP (294 aa)) is regulatory N-terminal domain. Over 2–331 (AAAKVALTKR…LLQVAESAYR (330 aa)) the chain is Mitochondrial intermembrane. 4 EF-hand domains span residues 51–86 (SQPNPKTVELLSGVADQTKDGLISFQEFVAFESVLC), 87–122 (APDALFMVAFQLFDKAGKGEVTFEDVKQVFGQTTIH), 123–157 (QHIPFNWDSEFVQLHFGKERKRHLTYAEFTQFLLE), and 158–193 (IQLEHAKQAFVQRDNASTGRVTAIDFRDIMVTIRPH). 5 residues coordinate Ca(2+): Asp-66, Thr-68, Asp-70, Leu-72, and Glu-77. The segment at 296 to 311 (LEEGTLPFNLAEAQRQ) is linker loop domain. Positions 321 to 611 (VLLQVAESAY…LQRWFYIDFG (291 aa)) are carrier domain. 3 Solcar repeats span residues 326-418 (AESA…VRDK), 426-510 (VPLA…ARAS), and 518-605 (VSPG…LQRW). A helical transmembrane segment spans residues 332–349 (FGLGSVAGAVGATAVYPI). At 350-392 (DLVKTRMQNQRSTGSFVGELMYKNSFDCFKKVLRYEGFFGLYR) the chain is on the mitochondrial matrix side. N6-acetyllysine occurs at positions 353 and 372. The helical transmembrane segment at 393–412 (GLLPQLLGVAPEKAIKLTVN) threads the bilayer. Topologically, residues 413–435 (DFVRDKFMHKDGSVPLAAEILAG) are mitochondrial intermembrane. A helical transmembrane segment spans residues 436-449 (GCAGGSQVIFTNPL). Residues 450–484 (EIVKIRLQVAGEITTGPRVSALSVVRDLGFFGIYK) lie on the Mitochondrial matrix side of the membrane. Lys-453 bears the N6-methyllysine mark. Lys-484 is modified (N6-acetyllysine; alternate). Position 484 is an N6-succinyllysine; alternate (Lys-484). A helical transmembrane segment spans residues 485–504 (GAKACFLRDIPFSAIYFPCY). Residues 505-523 (AHARASFANEDGQVSPGSL) are Mitochondrial intermembrane-facing. The helical transmembrane segment at 524-541 (LLAGAIAGMPAASLVTPA) threads the bilayer. At 542 to 580 (DVIKTRLQVAARAGQTTYSGVIDCFKKILREEGPKALWK) the chain is on the mitochondrial matrix side. The residue at position 580 (Lys-580) is an N6-succinyllysine. The chain crosses the membrane as a helical span at residues 581-599 (GAARVFRSSPQFGVTLLTY). Residues 600–674 (ELLQRWFYID…PTSEAIGGGP (75 aa)) lie on the Mitochondrial intermembrane side of the membrane. The interval 612–674 (GVKPMGSEPV…PTSEAIGGGP (63 aa)) is C-terminal domain. Lys-661 carries the N6-acetyllysine modification.

Belongs to the mitochondrial carrier (TC 2.A.29) family. In terms of assembly, homodimer (via N-terminus).

It localises to the mitochondrion inner membrane. It carries out the reaction L-aspartate(in) + L-glutamate(out) + H(+)(out) = L-aspartate(out) + L-glutamate(in) + H(+)(in). The enzyme catalyses 3-sulfino-L-alanine(out) + L-glutamate(in) + H(+)(in) = 3-sulfino-L-alanine(in) + L-glutamate(out) + H(+)(out). It catalyses the reaction 3-sulfino-L-alanine(out) + L-aspartate(in) = 3-sulfino-L-alanine(in) + L-aspartate(out). Functionally, mitochondrial electrogenic aspartate/glutamate antiporter that favors efflux of aspartate and entry of glutamate and proton within the mitochondria as part of the malate-aspartate shuttle. Also mediates the uptake of L-cysteinesulfinate (3-sulfino-L-alanine) by mitochondria in exchange of L-glutamate and proton. Can also exchange L-cysteinesulfinate with aspartate in their anionic form without any proton translocation. Lacks transport activity towards gamma-aminobutyric acid (GABA). The protein is Electrogenic aspartate/glutamate antiporter SLC25A13, mitochondrial of Macaca fascicularis (Crab-eating macaque).